The following is a 368-amino-acid chain: MRSLLLLIVILILGIKFYSIEFLATVLVISFLIFFHELGHFLAARSLGVKVEVFSIGFGKSLIEREFKGTNYRLSTLPLGGYVKLKGQDDMRPGFENLDKDSYSILSPLKKIYILFAGPFFNLILAFFLYIIIGNLGLNKLAPQIGNIAPNSAAQEIGLQKNDTILEINGIRIQTFDEISKHLSLDPLKILINREGKNLEFILTPKIGQGYNDFGQIVEKPQLGVSPNGTSTLVKHQGLESFKYAAQESFQASTLIIKGIVKLISGEVEAKNLGGIITMTEITSKAAQNSFTLLLFITALISINLGILNLLPIPMLDGGHILFNLYEMIFRRKVPQRTFEYLSYTGMAILLSLMLFATYNDISRIIGE.

Position 36 (H36) interacts with Zn(2+). Residue E37 is part of the active site. Zn(2+) is bound at residue H40. 3 helical membrane passes run 112–134 (IYIL…IIIG), 291–313 (FTLL…LLPI), and 338–360 (TFEY…ATYN). The 72-residue stretch at 126-197 (AFFLYIIIGN…LKILINREGK (72 aa)) folds into the PDZ domain.

It belongs to the peptidase M50B family. Zn(2+) is required as a cofactor.

The protein resides in the cell inner membrane. The polypeptide is Putative zinc metalloprotease Cj1068 (Campylobacter jejuni subsp. jejuni serotype O:2 (strain ATCC 700819 / NCTC 11168)).